Here is a 551-residue protein sequence, read N- to C-terminus: Chaperonin GroEL (551 aa).

Residues 30-33 (TLGP), Lys-51, 87-91 (DGTTT), Gly-415, 478-480 (NAA), and Asp-494 contribute to the ATP site.

The protein belongs to the chaperonin (HSP60) family. As to quaternary structure, forms a cylinder of 14 subunits composed of two heptameric rings stacked back-to-back. Interacts with the co-chaperonin GroES.

The protein localises to the cytoplasm. It catalyses the reaction ATP + H2O + a folded polypeptide = ADP + phosphate + an unfolded polypeptide.. In terms of biological role, together with its co-chaperonin GroES, plays an essential role in assisting protein folding. The GroEL-GroES system forms a nano-cage that allows encapsulation of the non-native substrate proteins and provides a physical environment optimized to promote and accelerate protein folding. The chain is Chaperonin GroEL from Syntrophotalea carbinolica (strain DSM 2380 / NBRC 103641 / GraBd1) (Pelobacter carbinolicus).